Consider the following 297-residue polypeptide: uncharacterized protein (297 aa).

Residue E46 is part of the active site.

The protein belongs to the PhzF family. As to quaternary structure, homodimer and homotetramer.

This is an uncharacterized protein from Escherichia coli O157:H7.